The primary structure comprises 149 residues: MSNLYKIGTETRNKIKKFRTSTARTDSIKALSIKIEPKPSYEIIVDEDEQEELDEIEDLSELAEILPDNSPRFVLTAYPTTTKDGFKQTPLVLVYWKPMTVVSQEWKMLYAGALEMIREECGTFKLIEVSSGLEDDSDVEELREQLENC.

S2 is modified (N-acetylserine). Residues 3-147 (NLYKIGTETR…DVEELREQLE (145 aa)) form the ADF-H domain. S137 bears the Phosphoserine mark.

It belongs to the actin-binding proteins ADF family. GMF subfamily.

It localises to the cytoplasm. The protein resides in the nucleus. Its function is as follows. May be involved in mitochondrial organization and biogenesis. The chain is Protein AIM7 (AIM7) from Saccharomyces cerevisiae (strain ATCC 204508 / S288c) (Baker's yeast).